The sequence spans 188 residues: Ribosome hibernation promotion factor (188 aa).

A disordered region spans residues 93–125; that stretch reads KTRVNRKKRKESEHEPFPATPETPPETAVDHDK.

The protein belongs to the HPF/YfiA ribosome-associated protein family. Long HPF subfamily. Interacts with 100S ribosomes.

It localises to the cytoplasm. Functionally, required for dimerization of active 70S ribosomes into 100S ribosomes in stationary phase; 100S ribosomes are translationally inactive and sometimes present during exponential growth. The sequence is that of Ribosome hibernation promotion factor from Staphylococcus carnosus (strain TM300).